The following is a 246-amino-acid chain: Probable transcriptional regulatory protein HS_0508 (246 aa).

Belongs to the TACO1 family.

Its subcellular location is the cytoplasm. The chain is Probable transcriptional regulatory protein HS_0508 from Histophilus somni (strain 129Pt) (Haemophilus somnus).